Consider the following 224-residue polypeptide: Endonuclease NucS (224 aa).

It belongs to the NucS endonuclease family.

It is found in the cytoplasm. In terms of biological role, cleaves both 3' and 5' ssDNA extremities of branched DNA structures. In Rhodococcus jostii (strain RHA1), this protein is Endonuclease NucS.